Consider the following 265-residue polypeptide: VSTITFDVGSATISKYTTFLESLRNQAKDPSLKCYGIPMLPNTNPNPKYLLVELNAKLSSGEVKSITLMLRRHNLYVMGYSDPYDNKCRYHIFKDISSTTERKDVETTLCPNASSRVSKNISYDSSYPALENKAGRSRSQVQLGIQILNSDIGKISGVKSFTDKTEAEFLLVAIQMVSEATRFKYIENQVKTNFNRAFYPNAKVLNLEETWGKISMAIHGAKNGAFSKPLELQNADGSKWIVLRVDEIKPDVALLKYVSGSCQAT.

Cystine bridges form between Cys34-Cys262 and Cys88-Cys110. The N-linked (GlcNAc...) asparagine glycan is linked to Asn120.

This sequence belongs to the ribosome-inactivating protein family. Type 1 RIP subfamily. Glycosylated. As to expression, seeds.

The enzyme catalyses Endohydrolysis of the N-glycosidic bond at one specific adenosine on the 28S rRNA.. Inhibits protein synthesis in animal cells. Useful as immunotoxin for pharmacological applications. This chain is Protein synthesis inhibitor PD-S2, found in Phytolacca dioica (Bella sombra tree).